The primary structure comprises 314 residues: MTRTRSGSLAAGGLNWASLPLKLFAGGNAKFWDPADIDFTRDRADWEKLSDDERDYATRLCTQFIAGEEAVTEDIQPFMSAMRAEGRLADEMYLTQFAFEEAKHTQVFRMWLDAVGISEDLHRYLDDLPAYRQIFYAELPECLNALSADPSPAAQVRASVTYNHIVEGMLALTGYYAWHKICVERAILPGMQELVRRIGDDERRHMAWGTFTCRRHVAADDANWTVFETRMNELIPLALRLIEEGFALYGDQPPFDLSKDDFLQYSTDKGMRRFGTISNARGRPVAEIDVDYSPAQLEDTFADEDRRTLAAASA.

Residues E68, E101, and H104 each coordinate Mn(2+). Positions 71 to 162 (VTEDIQPFMS…AAQVRASVTY (92 aa)) form a cross-link, 3-(O4'-tyrosyl)-valine (Val-Tyr). Fe cation is bound at residue E101. Positions 167, 202, and 205 each coordinate Fe cation.

The protein belongs to the ribonucleoside diphosphate reductase small chain family. R2-like ligand binding oxidase subfamily. Homodimer. Fe cation is required as a cofactor. Mn(2+) serves as cofactor.

In terms of biological role, probable oxidase that might be involved in lipid metabolism. The chain is R2-like ligand binding oxidase from Mycobacterium bovis (strain ATCC BAA-935 / AF2122/97).